Consider the following 547-residue polypeptide: (E)-beta-caryophyllene synthase (547 aa).

Mg(2+) contacts are provided by Asp-302 and Asp-306. The substrate site is built by Asp-302, Asp-306, Arg-443, and Asn-446. A DDXXD motif motif is present at residues 302–306; sequence DDLYD. Positions 446 and 454 each coordinate Mg(2+).

The protein belongs to the terpene synthase family. In terms of assembly, monomer. It depends on Mg(2+) as a cofactor. Requires Mn(2+) as cofactor.

The protein resides in the cytoplasm. It catalyses the reaction (2E,6E)-farnesyl diphosphate = (-)-(E)-beta-caryophyllene + diphosphate. Its pathway is secondary metabolite biosynthesis; terpenoid biosynthesis. Its function is as follows. Component of the volatile terpenes biosynthesis pathways. Sesquiterpene synthase that converts farnesyl diphosphate to (E)-beta-caryophyllene. Involved in indirect defense by producing volatile signals attracting natural enemies of herbivores. This is (E)-beta-caryophyllene synthase from Zea mays (Maize).